Here is a 688-residue protein sequence, read N- to C-terminus: PTS system glucoside-specific EIICBA component (688 aa).

The PTS EIIC type-1 domain maps to K3 to D427. 10 consecutive transmembrane segments (helical) span residues I12–F32, L81–M101, L137–L157, F182–W202, L223–I243, A284–I304, I315–P335, F340–L360, L364–G384, and L395–I415. Residues A438–K519 form the PTS EIIB type-1 domain. The Phosphocysteine intermediate; for EIIB activity role is filled by C460. The region spanning D560–N664 is the PTS EIIA type-1 domain. The active-site Tele-phosphohistidine intermediate; for EIIA activity is the H612.

It is found in the cell membrane. In terms of biological role, the phosphoenolpyruvate-dependent sugar phosphotransferase system (sugar PTS), a major carbohydrate active -transport system, catalyzes the phosphorylation of incoming sugar substrates concomitantly with their translocation across the cell membrane. This system is involved in alpha- and beta-glucoside transport. This Staphylococcus aureus (strain MRSA252) protein is PTS system glucoside-specific EIICBA component (glcB).